The primary structure comprises 226 residues: Cytidylate kinase (226 aa).

Position 10–18 (10–18 (GPASSGKST)) interacts with ATP.

This sequence belongs to the cytidylate kinase family. Type 1 subfamily.

The protein localises to the cytoplasm. It carries out the reaction CMP + ATP = CDP + ADP. The enzyme catalyses dCMP + ATP = dCDP + ADP. The sequence is that of Cytidylate kinase from Streptococcus thermophilus (strain ATCC BAA-491 / LMD-9).